A 180-amino-acid chain; its full sequence is Adenine phosphoribosyltransferase (180 aa).

It belongs to the purine/pyrimidine phosphoribosyltransferase family. Homodimer.

It localises to the cytoplasm. The enzyme catalyses AMP + diphosphate = 5-phospho-alpha-D-ribose 1-diphosphate + adenine. Its pathway is purine metabolism; AMP biosynthesis via salvage pathway; AMP from adenine: step 1/1. Catalyzes a salvage reaction resulting in the formation of AMP, that is energically less costly than de novo synthesis. The polypeptide is Adenine phosphoribosyltransferase (Agrobacterium fabrum (strain C58 / ATCC 33970) (Agrobacterium tumefaciens (strain C58))).